We begin with the raw amino-acid sequence, 330 residues long: DNA-directed RNA polymerase subunit alpha (330 aa).

The tract at residues 1–236 is alpha N-terminal domain (alpha-NTD); sequence MQGSVTEFLK…EQLDAFVDLR (236 aa). The interval 250–330 is alpha C-terminal domain (alpha-CTD); that stretch reads FDPILLRPVD…NWPPASIAED (81 aa).

This sequence belongs to the RNA polymerase alpha chain family. Homodimer. The RNAP catalytic core consists of 2 alpha, 1 beta, 1 beta' and 1 omega subunit. When a sigma factor is associated with the core the holoenzyme is formed, which can initiate transcription.

The enzyme catalyses RNA(n) + a ribonucleoside 5'-triphosphate = RNA(n+1) + diphosphate. Its function is as follows. DNA-dependent RNA polymerase catalyzes the transcription of DNA into RNA using the four ribonucleoside triphosphates as substrates. The chain is DNA-directed RNA polymerase subunit alpha from Vibrio cholerae serotype O1 (strain ATCC 39315 / El Tor Inaba N16961).